The sequence spans 89 residues: Small ribosomal subunit protein uS15 (89 aa).

The protein belongs to the universal ribosomal protein uS15 family. In terms of assembly, part of the 30S ribosomal subunit. Forms a bridge to the 50S subunit in the 70S ribosome, contacting the 23S rRNA.

Functionally, one of the primary rRNA binding proteins, it binds directly to 16S rRNA where it helps nucleate assembly of the platform of the 30S subunit by binding and bridging several RNA helices of the 16S rRNA. In terms of biological role, forms an intersubunit bridge (bridge B4) with the 23S rRNA of the 50S subunit in the ribosome. The chain is Small ribosomal subunit protein uS15 from Mesorhizobium japonicum (strain LMG 29417 / CECT 9101 / MAFF 303099) (Mesorhizobium loti (strain MAFF 303099)).